A 285-amino-acid chain; its full sequence is 4-diphosphocytidyl-2-C-methyl-D-erythritol kinase (285 aa).

Lys-14 is a catalytic residue. 97–107 (PMGGGIGGGSS) serves as a coordination point for ATP. Residue Asp-139 is part of the active site.

Belongs to the GHMP kinase family. IspE subfamily.

It carries out the reaction 4-CDP-2-C-methyl-D-erythritol + ATP = 4-CDP-2-C-methyl-D-erythritol 2-phosphate + ADP + H(+). Its pathway is isoprenoid biosynthesis; isopentenyl diphosphate biosynthesis via DXP pathway; isopentenyl diphosphate from 1-deoxy-D-xylulose 5-phosphate: step 3/6. Its function is as follows. Catalyzes the phosphorylation of the position 2 hydroxy group of 4-diphosphocytidyl-2C-methyl-D-erythritol. The protein is 4-diphosphocytidyl-2-C-methyl-D-erythritol kinase of Tolumonas auensis (strain DSM 9187 / NBRC 110442 / TA 4).